Consider the following 159-residue polypeptide: Phospholipase A2 AP-PLA2-I (159 aa).

Residues 1–19 (MNFLVVIVTTVSLAGAASA) form the signal peptide. Residues 20–23 (GEIQ) constitute a propeptide that is removed on maturation. Intrachain disulfides connect C51–C159, C53–C69, C68–C139, C75–C132, C85–C125, and C110–C130. Ca(2+)-binding residues include Y52, G54, and G56. Residue H72 is part of the active site. Residue D73 coordinates Ca(2+). D133 is a catalytic residue.

This sequence belongs to the phospholipase A2 family. Group I subfamily. In terms of assembly, homodimer. It depends on Ca(2+) as a cofactor. In terms of tissue distribution, expressed by the venom gland.

It localises to the secreted. It catalyses the reaction a 1,2-diacyl-sn-glycero-3-phosphocholine + H2O = a 1-acyl-sn-glycero-3-phosphocholine + a fatty acid + H(+). Starfish phospholipase A2 (PLA2) that has hemorrhagic and capillary permeability-increasing activities and hence is considered to be deeply involved in the local inflammation. Shows hemolytic activity only in the presence of phosphatidylcholine (PC). PLA2 catalyzes the calcium-dependent hydrolysis of the 2-acyl groups in 3-sn-phosphoglycerides. The protein is Phospholipase A2 AP-PLA2-I of Acanthaster planci (Crown-of-thorns starfish).